We begin with the raw amino-acid sequence, 596 residues long: Cis-3-hydroxy-L-proline dehydratase (596 aa).

S67 acts as the Proton acceptor in catalysis.

The protein belongs to the AcnX family. In terms of assembly, monomer. Fe(3+) serves as cofactor.

The enzyme catalyses cis-3-hydroxy-L-proline = 1-pyrroline-2-carboxylate + H2O. With respect to regulation, inhibited by Zn(2+). Not inhibited by pyrrole-2-carboxylate nor its derivative 2-thiophenecarboxylate. Catalyzes the dehydration of cis-3-hydroxy-L-proline (c3LHyp) to Delta(1)-pyrroline-2-carboxylate (Pyr2C). No activity with L-proline, trans-4-hydroxy-L-proline (t4LHyp), cis-4-hydroxy-L-proline (c4LHyp), trans-3-hydroxy-L-proline (t3LHyp), D-proline, cis-4-hydroxy-D-proline (c4DHyp), trans-4-hydroxy-D-proline (t4DHyp) or L-serine as substrates. Because of the low catalytic efficiency, C3LHyp is likely not a main physiological substrate of this enzyme in H.jecorina. The polypeptide is Cis-3-hydroxy-L-proline dehydratase (Hypocrea jecorina (strain QM6a) (Trichoderma reesei)).